A 201-amino-acid polypeptide reads, in one-letter code: Probable GTP-binding protein EngB (201 aa).

The region spanning 21 to 191 is the EngB-type G domain; it reads PEAQIALAGR…WQELARAAGV (171 aa). Residues 29-36, 56-60, 75-78, 142-145, and 168-172 each bind GTP; these read GRSNVGKS, GKTRS, DLPG, TKAD, and VLTSS. Mg(2+) contacts are provided by Ser-36 and Thr-58.

This sequence belongs to the TRAFAC class TrmE-Era-EngA-EngB-Septin-like GTPase superfamily. EngB GTPase family. It depends on Mg(2+) as a cofactor.

Necessary for normal cell division and for the maintenance of normal septation. The polypeptide is Probable GTP-binding protein EngB (Desulfovibrio desulfuricans (strain ATCC 27774 / DSM 6949 / MB)).